Reading from the N-terminus, the 87-residue chain is CRISPR-associated endoribonuclease Cas2 (87 aa).

A Mg(2+)-binding site is contributed by D8.

This sequence belongs to the CRISPR-associated endoribonuclease Cas2 protein family. As to quaternary structure, homodimer, forms a heterotetramer with a Cas1 homodimer. Mg(2+) serves as cofactor.

Its function is as follows. CRISPR (clustered regularly interspaced short palindromic repeat), is an adaptive immune system that provides protection against mobile genetic elements (viruses, transposable elements and conjugative plasmids). CRISPR clusters contain sequences complementary to antecedent mobile elements and target invading nucleic acids. CRISPR clusters are transcribed and processed into CRISPR RNA (crRNA). Functions as a ssRNA-specific endoribonuclease. Involved in the integration of spacer DNA into the CRISPR cassette. This chain is CRISPR-associated endoribonuclease Cas2, found in Dictyoglomus turgidum (strain DSM 6724 / Z-1310).